The following is a 409-amino-acid chain: Aspartic protease pepA (409 aa).

Positions 1 to 19 are cleaved as a signal peptide; sequence MPSIVSLTAALTFVGAVIA. A propeptide spans 20 to 65 (activation peptide); the sequence is SPVEKRSAFSVEQVPHTTYLKNGPAQKVKTLRKYGKPVPQSLLDAA. In terms of domain architecture, Peptidase A1 spans 97–404; that stretch reads YLSPVTVGST…PDSPPRIGLA (308 aa). Active-site residues include D113 and D293. Residues C329 and C364 are joined by a disulfide bond. N335 carries N-linked (GlcNAc...) asparagine glycosylation.

The protein belongs to the peptidase A1 family. Monomer.

The protein localises to the secreted. In terms of biological role, secreted aspartic endopeptidase that allows assimilation of proteinaceous substrates. The scissile peptide bond is attacked by a nucleophilic water molecule activated by two aspartic residues in the active site. Shows a broad primary substrate specificity. Favors hydrophobic residues at the P1 and P1' positions. The chain is Aspartic protease pepA from Leptosphaeria maculans (strain JN3 / isolate v23.1.3 / race Av1-4-5-6-7-8) (Blackleg fungus).